The chain runs to 40 residues: Large ribosomal subunit protein bL36B (40 aa).

This sequence belongs to the bacterial ribosomal protein bL36 family.

The sequence is that of Large ribosomal subunit protein bL36B from Clavibacter michiganensis subsp. michiganensis (strain NCPPB 382).